We begin with the raw amino-acid sequence, 150 residues long: FCS-Like Zinc finger 15 (150 aa).

The span at 12–28 (NNNNNNNNNNNNNNNKN) shows a compositional bias: low complexity. The segment at 12–31 (NNNNNNNNNNNNNNNKNPLS) is disordered. Residues 67–111 (GFLEHCFLCRRKLLPAKDIYMYKGDRAFCSVECRSKQMIMDEEES) form an FLZ-type zinc finger. Positions 129–150 (SPATAPSRYRRDPRNQAGGFAY) are disordered.

This sequence belongs to the FLZ family. Interacts with KIN10 and KIN11 via its FLZ-type zinc finger domain. Interacts with KINB1 and KINB3 via its N-terminal part. Forms homodimer and heterodimer with FLZ1, FLZ2 and FLZ7 in vitro.

The protein localises to the cytoplasm. The protein resides in the P-body. In terms of biological role, may act as an adapter to facilitate the interaction of SnRK1 complex with effector proteins, conferring tissue- and stimulus-type specific differences in the SnRK1 regulation pathway. The sequence is that of FCS-Like Zinc finger 15 from Arabidopsis thaliana (Mouse-ear cress).